We begin with the raw amino-acid sequence, 146 residues long: Large ribosomal subunit protein uL11 (146 aa).

The protein belongs to the universal ribosomal protein uL11 family. As to quaternary structure, part of the ribosomal stalk of the 50S ribosomal subunit. Interacts with L10 and the large rRNA to form the base of the stalk. L10 forms an elongated spine to which L12 dimers bind in a sequential fashion forming a multimeric L10(L12)X complex. In terms of processing, one or more lysine residues are methylated.

Forms part of the ribosomal stalk which helps the ribosome interact with GTP-bound translation factors. The protein is Large ribosomal subunit protein uL11 of Blochmanniella floridana.